A 316-amino-acid polypeptide reads, in one-letter code: MSDDRLSVAIIGSGNIGTDLMIKIMRNSKLLKVGAMVGIDPKSDGLARAQRLGVPTTAEGVDGLLDMPAFRDIKIAFDATSAGAQAIHNQKLQAHGVRVIDLTPAAIGPYVIPVVNFDQHVDAPNINMVTCGGQATIPIVHAVSKVSPVHYAEIVASISSKSAGPGTRANIDEFTETTSKAILEVGGAAQGRAIIILNPAEPPLIMRDTVYCFVSAEANIDAITDSVEQMVKSVQEYVPGYRLKQKVQFEKIVAGNEQNIPGLGWSTGLKVSVFLEVEGAGHYLPSYAGNLDIMTSAGLTVAERIAGSGVQVGGLK.

An NAD(+)-binding site is contributed by 13-16; sequence SGNI. Catalysis depends on Cys-131, which acts as the Acyl-thioester intermediate. NAD(+) is bound by residues 162 to 170 and Asn-290; that span reads SAGPGTRAN.

This sequence belongs to the acetaldehyde dehydrogenase family.

The catalysed reaction is acetaldehyde + NAD(+) + CoA = acetyl-CoA + NADH + H(+). Its function is as follows. Catalyzes the conversion of acetaldehyde to acetyl-CoA, using NAD(+) and coenzyme A. Is the final enzyme in the meta-cleavage pathway for the degradation of 2-aminophenol. The chain is Acetaldehyde dehydrogenase (amnH) from Pseudomonas sp.